The following is a 164-amino-acid chain: MPTKIAVYPGSFDPITYGHLDIIDRALRIFDQVIVAVARNSAKSALFTTDERVDMIQRVLADNVRARVDTFDGLLIDYVLSQKATVIIRGLRAISDFEYEFQIAQMNRSISQDVETLFMMTSVPYGYLSSSIVKEVSSLNGPIDGLVPPLVRQALRDKFAGPDR.

S11 provides a ligand contact to substrate. ATP is bound by residues 11-12 (SF) and H19. Substrate is bound by residues K43, L75, and R89. ATP-binding positions include 90–92 (GLR), E100, and 125–131 (YGYLSSS).

This sequence belongs to the bacterial CoaD family. As to quaternary structure, homohexamer. Mg(2+) serves as cofactor.

The protein resides in the cytoplasm. It carries out the reaction (R)-4'-phosphopantetheine + ATP + H(+) = 3'-dephospho-CoA + diphosphate. Its pathway is cofactor biosynthesis; coenzyme A biosynthesis; CoA from (R)-pantothenate: step 4/5. Reversibly transfers an adenylyl group from ATP to 4'-phosphopantetheine, yielding dephospho-CoA (dPCoA) and pyrophosphate. The polypeptide is Phosphopantetheine adenylyltransferase (Geobacter sulfurreducens (strain ATCC 51573 / DSM 12127 / PCA)).